A 124-amino-acid polypeptide reads, in one-letter code: Small ribosomal subunit protein uS13 (124 aa).

The disordered stretch occupies residues 94-124; the sequence is GLPLRGQRTKNNSRTRKGKRKTVANKKKATK. Positions 100–124 are enriched in basic residues; that stretch reads QRTKNNSRTRKGKRKTVANKKKATK.

It belongs to the universal ribosomal protein uS13 family. Part of the 30S ribosomal subunit. Forms a loose heterodimer with protein S19. Forms two bridges to the 50S subunit in the 70S ribosome.

Functionally, located at the top of the head of the 30S subunit, it contacts several helices of the 16S rRNA. In the 70S ribosome it contacts the 23S rRNA (bridge B1a) and protein L5 of the 50S subunit (bridge B1b), connecting the 2 subunits; these bridges are implicated in subunit movement. Contacts the tRNAs in the A and P-sites. The polypeptide is Small ribosomal subunit protein uS13 (Flavobacterium johnsoniae (strain ATCC 17061 / DSM 2064 / JCM 8514 / BCRC 14874 / CCUG 350202 / NBRC 14942 / NCIMB 11054 / UW101) (Cytophaga johnsonae)).